Here is a 79-residue protein sequence, read N- to C-terminus: Ferredoxin (79 aa).

2 consecutive 4Fe-4S ferredoxin-type domains span residues 2–30 (PHVI…YDGG) and 31–60 (DQFY…PEED). Positions 9 and 17 each coordinate [3Fe-4S] cluster. The [4Fe-4S] cluster site is built by Cys21, Cys40, Cys43, and Cys46. Cys50 serves as a coordination point for [3Fe-4S] cluster.

Requires [4Fe-4S] cluster as cofactor. The cofactor is [3Fe-4S] cluster.

In terms of biological role, ferredoxins are iron-sulfur proteins that transfer electrons in a wide variety of metabolic reactions. In Thermus thermophilus (strain ATCC 27634 / DSM 579 / HB8), this protein is Ferredoxin.